We begin with the raw amino-acid sequence, 130 residues long: Gonadotropin subunit beta-1 (130 aa).

An N-terminal signal peptide occupies residues 1-18 (MRMRFVVMVILLPALMMS). Intrachain disulfides connect Cys-26–Cys-74, Cys-40–Cys-89, Cys-51–Cys-105, Cys-55–Cys-107, and Cys-110–Cys-117. N-linked (GlcNAc...) asparagine glycosylation is present at Asn-30.

This sequence belongs to the glycoprotein hormones subunit beta family. In terms of assembly, heterodimer of an alpha and a beta chain.

It localises to the secreted. Involved in gametogenesis and steroidogenesis. This chain is Gonadotropin subunit beta-1 (cgba), found in Carassius auratus (Goldfish).